The sequence spans 290 residues: 4-hydroxy-tetrahydrodipicolinate synthase (290 aa).

A pyruvate-binding site is contributed by T48. Y137 functions as the Proton donor/acceptor in the catalytic mechanism. K165 acts as the Schiff-base intermediate with substrate in catalysis. Residue I206 participates in pyruvate binding.

It belongs to the DapA family. In terms of assembly, homotetramer; dimer of dimers.

Its subcellular location is the cytoplasm. It catalyses the reaction L-aspartate 4-semialdehyde + pyruvate = (2S,4S)-4-hydroxy-2,3,4,5-tetrahydrodipicolinate + H2O + H(+). The protein operates within amino-acid biosynthesis; L-lysine biosynthesis via DAP pathway; (S)-tetrahydrodipicolinate from L-aspartate: step 3/4. In terms of biological role, catalyzes the condensation of (S)-aspartate-beta-semialdehyde [(S)-ASA] and pyruvate to 4-hydroxy-tetrahydrodipicolinate (HTPA). The chain is 4-hydroxy-tetrahydrodipicolinate synthase from Enterococcus faecalis (strain ATCC 700802 / V583).